The primary structure comprises 292 residues: Elongation factor Ts (292 aa).

The interval 79–82 is involved in Mg(2+) ion dislocation from EF-Tu; sequence TDFV.

The protein belongs to the EF-Ts family.

The protein localises to the cytoplasm. Its function is as follows. Associates with the EF-Tu.GDP complex and induces the exchange of GDP to GTP. It remains bound to the aminoacyl-tRNA.EF-Tu.GTP complex up to the GTP hydrolysis stage on the ribosome. This chain is Elongation factor Ts, found in Xanthomonas oryzae pv. oryzae (strain MAFF 311018).